The primary structure comprises 72 residues: Holocyclotoxin-1 (72 aa).

The signal sequence occupies residues 1 to 22 (MSKVTTVFIGALVLLLLIENGF). 4 disulfide bridges follow: C24–C40, C32–C57, C36–C60, and C42–C70.

As to expression, expressed in salivary glands.

The protein resides in the secreted. In terms of biological role, probable neurotoxin. The sequence is that of Holocyclotoxin-1 from Ixodes holocyclus (Australian paralysis tick).